Consider the following 130-residue polypeptide: Small ribosomal subunit protein uS8A (130 aa).

It belongs to the universal ribosomal protein uS8 family. Component of the small ribosomal subunit (SSU). Mature yeast ribosomes consist of a small (40S) and a large (60S) subunit. The 40S small subunit contains 1 molecule of ribosomal RNA (18S rRNA) and at least 33 different proteins. The large 60S subunit contains 3 rRNA molecules (25S, 5.8S and 5S rRNA) and at least 46 different proteins.

The protein resides in the cytoplasm. Its subcellular location is the nucleus. Functionally, component of the ribosome, a large ribonucleoprotein complex responsible for the synthesis of proteins in the cell. The small ribosomal subunit (SSU) binds messenger RNAs (mRNAs) and translates the encoded message by selecting cognate aminoacyl-transfer RNA (tRNA) molecules. The large subunit (LSU) contains the ribosomal catalytic site termed the peptidyl transferase center (PTC), which catalyzes the formation of peptide bonds, thereby polymerizing the amino acids delivered by tRNAs into a polypeptide chain. The nascent polypeptides leave the ribosome through a tunnel in the LSU and interact with protein factors that function in enzymatic processing, targeting, and the membrane insertion of nascent chains at the exit of the ribosomal tunnel. This Schizosaccharomyces pombe (strain 972 / ATCC 24843) (Fission yeast) protein is Small ribosomal subunit protein uS8A (rps2201).